A 552-amino-acid polypeptide reads, in one-letter code: MAGUK p55 subfamily member 2 (552 aa).

2 consecutive L27 domains span residues 8 to 59 (SESA…EETK) and 60 to 118 (LEAV…YETP). A Phosphoserine modification is found at serine 42. Position 117 is a phosphothreonine (threonine 117). Residue serine 121 is modified to Phosphoserine. The PDZ domain occupies 140 to 219 (MVGIRKTAGE…SVILKILPSY (80 aa)). One can recognise an SH3 domain in the interval 225-293 (PRQVFVKCHF…PSQLLEEKRK (69 aa)). The region spanning 350-537 (RKTLVLIGAQ…TFRELQTAME (188 aa)) is the Guanylate kinase-like domain.

The protein belongs to the MAGUK family. In terms of assembly, can homomultimerise. Interacts with CACNG2. Interacts (via the SH3-Guanylate kinase-like sub-module) with DLG4/PSD95 and DLGAP1/GKAP. Interacts (via the PDZ domain) with CADM1 (via C-terminus). Interacts with KCNN2/SK2 (via N-terminal domain). Interacts with SRC. In terms of processing, phosphorylated by SRC. As to expression, expressed in hippocampal neurons.

The protein resides in the cell projection. It is found in the dendrite. The protein localises to the postsynaptic density. Its subcellular location is the cytoplasm. It localises to the cytoskeleton. The protein resides in the membrane. In terms of biological role, postsynaptic MAGUK scaffold protein that links CADM1 cell adhesion molecules to core components of the postsynaptic density. In CA1 pyramidal neurons, required for synaptic KCNN2-containing channel function and long-term potentiation expression. Seems to negatively regulate SRC function in epithelial cells. The protein is MAGUK p55 subfamily member 2 of Rattus norvegicus (Rat).